The primary structure comprises 202 residues: Orotate phosphoribosyltransferase (202 aa).

5-phospho-alpha-D-ribose 1-diphosphate contacts are provided by residues Lys-93 and 113–121; that span reads EDIITTGGS. Positions 117 and 145 each coordinate orotate.

It belongs to the purine/pyrimidine phosphoribosyltransferase family. PyrE subfamily. In terms of assembly, homodimer. It depends on Mg(2+) as a cofactor.

It carries out the reaction orotidine 5'-phosphate + diphosphate = orotate + 5-phospho-alpha-D-ribose 1-diphosphate. It functions in the pathway pyrimidine metabolism; UMP biosynthesis via de novo pathway; UMP from orotate: step 1/2. Its function is as follows. Catalyzes the transfer of a ribosyl phosphate group from 5-phosphoribose 1-diphosphate to orotate, leading to the formation of orotidine monophosphate (OMP). This chain is Orotate phosphoribosyltransferase, found in Campylobacter curvus (strain 525.92).